A 200-amino-acid chain; its full sequence is Imidazole glycerol phosphate synthase subunit HisH (200 aa).

The Glutamine amidotransferase type-1 domain occupies 3 to 200 (DLALIDAGGA…LRNFLEMSFP (198 aa)). Cys78 (nucleophile) is an active-site residue. Active-site residues include His179 and Glu181.

In terms of assembly, heterodimer of HisH and HisF.

The protein localises to the cytoplasm. The catalysed reaction is 5-[(5-phospho-1-deoxy-D-ribulos-1-ylimino)methylamino]-1-(5-phospho-beta-D-ribosyl)imidazole-4-carboxamide + L-glutamine = D-erythro-1-(imidazol-4-yl)glycerol 3-phosphate + 5-amino-1-(5-phospho-beta-D-ribosyl)imidazole-4-carboxamide + L-glutamate + H(+). The enzyme catalyses L-glutamine + H2O = L-glutamate + NH4(+). The protein operates within amino-acid biosynthesis; L-histidine biosynthesis; L-histidine from 5-phospho-alpha-D-ribose 1-diphosphate: step 5/9. In terms of biological role, IGPS catalyzes the conversion of PRFAR and glutamine to IGP, AICAR and glutamate. The HisH subunit catalyzes the hydrolysis of glutamine to glutamate and ammonia as part of the synthesis of IGP and AICAR. The resulting ammonia molecule is channeled to the active site of HisF. The protein is Imidazole glycerol phosphate synthase subunit HisH of Xanthomonas campestris pv. campestris (strain 8004).